The primary structure comprises 171 residues: MAEKRNIFLVGPMGAGKSTIGRHLAQMLHLEFHDSDQEIEQRTGADIAWVFDVEGEEGFRRREAQVIADLSEKQGIVLATGGGSVQSKDIRNHLSARGIVVYLETTIDKQVARTQRDKRRPLLQVDDPREVLESLAEIRNPLYEEIADVVVKTDDQSAKVVANQIIEKLGF.

Residue 14–19 (GAGKST) coordinates ATP. Ser-18 is a binding site for Mg(2+). Substrate is bound by residues Asp-36, Arg-60, and Gly-82. Arg-120 provides a ligand contact to ATP. Position 139 (Arg-139) interacts with substrate. Gln-156 contacts ATP.

The protein belongs to the shikimate kinase family. Monomer. Mg(2+) serves as cofactor.

It localises to the cytoplasm. It carries out the reaction shikimate + ATP = 3-phosphoshikimate + ADP + H(+). It participates in metabolic intermediate biosynthesis; chorismate biosynthesis; chorismate from D-erythrose 4-phosphate and phosphoenolpyruvate: step 5/7. Functionally, catalyzes the specific phosphorylation of the 3-hydroxyl group of shikimic acid using ATP as a cosubstrate. The chain is Shikimate kinase from Shewanella oneidensis (strain ATCC 700550 / JCM 31522 / CIP 106686 / LMG 19005 / NCIMB 14063 / MR-1).